A 444-amino-acid chain; its full sequence is Spermidine/putrescine import ATP-binding protein PotA (444 aa).

Residues 11 to 332 (ISLVDVDKEF…PVNKWVANFI (322 aa)) enclose the ABC transporter domain. 43–50 (GPSGSGKT) serves as a coordination point for ATP. The insert stretch occupies residues 111 to 201 (RIKKKAEEIP…ESFKKKYLTR (91 aa)).

Belongs to the ABC transporter superfamily. Spermidine/putrescine importer (TC 3.A.1.11.1) family. In terms of assembly, the complex is composed of two ATP-binding proteins (PotA), two transmembrane proteins (PotB and PotC) and a solute-binding protein (PotD).

It localises to the cell membrane. The enzyme catalyses ATP + H2O + polyamine-[polyamine-binding protein]Side 1 = ADP + phosphate + polyamineSide 2 + [polyamine-binding protein]Side 1.. Its function is as follows. Part of the ABC transporter complex PotABCD involved in spermidine/putrescine import. Responsible for energy coupling to the transport system. The polypeptide is Spermidine/putrescine import ATP-binding protein PotA (Mesomycoplasma hyopneumoniae (strain J / ATCC 25934 / NCTC 10110) (Mycoplasma hyopneumoniae)).